Here is a 541-residue protein sequence, read N- to C-terminus: Membrane protein insertase YidC (541 aa).

The chain crosses the membrane as a helical span at residues 6–26; sequence SLLVLALIFISFLVYQQWQLD. Residues 34 to 56 form a disordered region; the sequence is EQTTSITATSDVPASSPSNSQAI. Transmembrane regions (helical) follow at residues 337–357, 416–436, 454–474, and 495–515; these read FWLL…IICV, LGGC…YWTF, LSAQ…MFLL, and PLVF…YWLV.

This sequence belongs to the OXA1/ALB3/YidC family. Type 1 subfamily. In terms of assembly, interacts with the Sec translocase complex via SecD. Specifically interacts with transmembrane segments of nascent integral membrane proteins during membrane integration.

It is found in the cell inner membrane. Its function is as follows. Required for the insertion and/or proper folding and/or complex formation of integral membrane proteins into the membrane. Involved in integration of membrane proteins that insert both dependently and independently of the Sec translocase complex, as well as at least some lipoproteins. Aids folding of multispanning membrane proteins. This is Membrane protein insertase YidC from Haemophilus influenzae (strain 86-028NP).